A 445-amino-acid polypeptide reads, in one-letter code: Phosphoglucosamine mutase (445 aa).

The active-site Phosphoserine intermediate is the Ser-99. Mg(2+)-binding residues include Ser-99, Asp-242, Asp-244, and Asp-246. Ser-99 carries the phosphoserine modification.

Belongs to the phosphohexose mutase family. Requires Mg(2+) as cofactor. Post-translationally, activated by phosphorylation.

It catalyses the reaction alpha-D-glucosamine 1-phosphate = D-glucosamine 6-phosphate. Its function is as follows. Catalyzes the conversion of glucosamine-6-phosphate to glucosamine-1-phosphate. This chain is Phosphoglucosamine mutase, found in Sulfurovum sp. (strain NBC37-1).